We begin with the raw amino-acid sequence, 154 residues long: Superoxide dismutase [Cu-Zn] (154 aa).

Cu cation contacts are provided by histidine 47, histidine 49, and histidine 64. Cysteine 58 and cysteine 147 form a disulfide bridge. Zn(2+) is bound by residues histidine 64, histidine 72, histidine 81, and aspartate 84. Histidine 121 provides a ligand contact to Cu cation. Arginine 144 is a binding site for substrate.

The protein belongs to the Cu-Zn superoxide dismutase family. In terms of assembly, homodimer. The cofactor is Cu cation. Zn(2+) serves as cofactor.

The protein resides in the cytoplasm. The catalysed reaction is 2 superoxide + 2 H(+) = H2O2 + O2. Destroys radicals which are normally produced within the cells and which are toxic to biological systems. The polypeptide is Superoxide dismutase [Cu-Zn] (sodC) (Aspergillus fumigatus (strain ATCC MYA-4609 / CBS 101355 / FGSC A1100 / Af293) (Neosartorya fumigata)).